A 541-amino-acid polypeptide reads, in one-letter code: Glucose-6-phosphate isomerase (541 aa).

The Proton donor role is filled by glutamate 346. Residues histidine 377 and lysine 506 contribute to the active site.

It belongs to the GPI family.

The protein localises to the cytoplasm. The catalysed reaction is alpha-D-glucose 6-phosphate = beta-D-fructose 6-phosphate. It participates in carbohydrate biosynthesis; gluconeogenesis. It functions in the pathway carbohydrate degradation; glycolysis; D-glyceraldehyde 3-phosphate and glycerone phosphate from D-glucose: step 2/4. In terms of biological role, catalyzes the reversible isomerization of glucose-6-phosphate to fructose-6-phosphate. In Rhizobium etli (strain CIAT 652), this protein is Glucose-6-phosphate isomerase.